Here is a 923-residue protein sequence, read N- to C-terminus: Protocadherin gamma-B5 (923 aa).

The N-terminal stretch at 1-30 (MGSGAGELGRAERLPVLFLFLLSLFCPALC) is a signal peptide. Cadherin domains lie at 31-133 (EQIR…TPKF), 134-242 (TQNS…PPVF), 243-343 (NRDV…SPEV), 344-448 (TFHS…APVF), 449-558 (HQAS…APRV), and 566-671 (DGSA…LPDI). Residues 31–687 (EQIRYRIPEE…SDPQAELQFY (657 aa)) are Extracellular-facing. Asn-415 and Asn-541 each carry an N-linked (GlcNAc...) asparagine glycan. Residues 688–708 (LVVALALISVLFLLAVILAVA) traverse the membrane as a helical segment. Topologically, residues 709–923 (LRLRRSSSPA…KKKSGKKEKK (215 aa)) are cytoplasmic. Disordered stretches follow at residues 794–832 (TSHPELQAPPNTDWRFSQAQRPGTSGSQNGDDTGTWPNN) and 893–923 (ATLTNAAGKRDGKAPAGGNGNKKKSGKKEKK). The span at 807-832 (WRFSQAQRPGTSGSQNGDDTGTWPNN) shows a compositional bias: polar residues. Residues 913-923 (NKKKSGKKEKK) show a composition bias toward basic residues.

It localises to the cell membrane. Its function is as follows. Potential calcium-dependent cell-adhesion protein. May be involved in the establishment and maintenance of specific neuronal connections in the brain. The polypeptide is Protocadherin gamma-B5 (PCDHGB5) (Homo sapiens (Human)).